The chain runs to 796 residues: Nuclear GTPase SLIP-GC (796 aa).

Basic and acidic residues predominate over residues 1–22 (MAETKDVFGQEPHPVEDDLYKE). The disordered stretch occupies residues 1–35 (MAETKDVFGQEPHPVEDDLYKERTRKRRKSDRDQR). Residue 107-114 (GSTGAGKS) coordinates GTP. 2 coiled-coil regions span residues 158–185 (SDQEWREELKNLTKLLHRTEELSREEAD) and 745–775 (KELADVGSEYKEMEKLHRSLREVAENARLRK).

As to expression, expressed in germinal center B-cell and in lymphomas derived from germinal center B-cell.

The protein localises to the nucleus speckle. Functionally, nuclear GTPase found in germinal center B-cells, where it may inhibit function of the activation-induced cytidine deaminase AICDA. Reduces somatic hypermutation in B-cells which may enhance genome stability. This chain is Nuclear GTPase SLIP-GC (NUGGC), found in Homo sapiens (Human).